The sequence spans 310 residues: D-alanine--D-alanine ligase (310 aa).

The 196-residue stretch at 107–302 (KQAFQAARLT…FEDLVERILA (196 aa)) folds into the ATP-grasp domain. 135–188 (EFSLPVVVKPSQEGSSVGVSIVKKESEFAAAMKEAFRYDREILVEQFIKGSEVQ) is a binding site for ATP. Mg(2+)-binding residues include D256, E269, and N271.

It belongs to the D-alanine--D-alanine ligase family. Mg(2+) is required as a cofactor. The cofactor is Mn(2+).

Its subcellular location is the cytoplasm. It catalyses the reaction 2 D-alanine + ATP = D-alanyl-D-alanine + ADP + phosphate + H(+). The protein operates within cell wall biogenesis; peptidoglycan biosynthesis. Cell wall formation. This chain is D-alanine--D-alanine ligase, found in Geotalea uraniireducens (strain Rf4) (Geobacter uraniireducens).